The following is a 168-amino-acid chain: Pathogenesis-related protein 1B (168 aa).

The N-terminal stretch at 1–30 (MGFFLFSQMPSFFLVSTLLLFLIISHSSHA) is a signal peptide. The SCP domain occupies 38 to 156 (LDAHNTARAD…NGGYVVSCNY (119 aa)).

This sequence belongs to the CRISP family. Post-translationally, three disulfide bonds are present.

It localises to the vacuole. Probably involved in the defense reaction of plants against pathogens. The polypeptide is Pathogenesis-related protein 1B (Nicotiana tabacum (Common tobacco)).